Consider the following 241-residue polypeptide: MIVGVLVAAATPIISSASATPANIAGMVVFIDPGHNGANDASIGRQVPTGRGGTKNCQASGTSTNSGYPEHTFTWETGLRLRAALNALGVRTALSRGNDNALGPCVDERANMANALRPNAIVSLHADGGPASGRGFHVNYSAPPLNAIQAGPSVQFARIMRDQLQASGIPKANYIGQDGLYGRSDLAGLNLAQYPSILVELGNMKNPADSALMESAEGRQKYANALVRGVAGFLATQGQAR.

The first 24 residues, 1–24 (MIVGVLVAAATPIISSASATPANI), serve as a signal peptide directing secretion. The region spanning 29–230 (VFIDPGHNGA…KYANALVRGV (202 aa)) is the MurNAc-LAA domain. His-35 is a binding site for Zn(2+). Residues 45–69 (RQVPTGRGGTKNCQASGTSTNSGYP) form a disordered region. Residues 55–67 (KNCQASGTSTNSG) are compositionally biased toward polar residues. The cysteines at positions 57 and 105 are disulfide-linked. Zn(2+) is bound by residues Glu-70 and His-125. Glu-200 serves as the catalytic Proton donor/acceptor.

This sequence belongs to the N-acetylmuramoyl-L-alanine amidase 3 family. In terms of assembly, monomer. The cofactor is Zn(2+).

It is found in the periplasm. It carries out the reaction Hydrolyzes the link between N-acetylmuramoyl residues and L-amino acid residues in certain cell-wall glycopeptides.. Its pathway is cell wall degradation; peptidoglycan degradation. The structure reveals a short flexible hairpin turn that partially occludes the active site and may be involved in autoregulation. Functionally, cell-wall hydrolase that hydrolyzes the amide bond between N-acetylmuramic acid and L-alanine in cell-wall glycopeptides. Is able to hydrolyze the cell walls of several bacterial species (i.e. Paenibacillus sp., B.avium, E.coli DH5alpha, E.aerogenes, L.acidophilus, B.thuringiensis, B.pumilus, B.subtilis and E.coli W3110), thereby showing that it is a cell-wall hydrolase with broad-spectrum activity. May have a role in peptidoglycan fragment recycling. The polypeptide is N-acetylmuramoyl-L-alanine amidase Rv3717 (Mycobacterium tuberculosis (strain ATCC 25618 / H37Rv)).